Consider the following 200-residue polypeptide: Crossover junction endodeoxyribonuclease RuvC (200 aa).

Catalysis depends on residues D18, E78, and D151. Mg(2+) contacts are provided by D18, E78, and D151.

It belongs to the RuvC family. In terms of assembly, homodimer which binds Holliday junction (HJ) DNA. The HJ becomes 2-fold symmetrical on binding to RuvC with unstacked arms; it has a different conformation from HJ DNA in complex with RuvA. In the full resolvosome a probable DNA-RuvA(4)-RuvB(12)-RuvC(2) complex forms which resolves the HJ. It depends on Mg(2+) as a cofactor.

Its subcellular location is the cytoplasm. The enzyme catalyses Endonucleolytic cleavage at a junction such as a reciprocal single-stranded crossover between two homologous DNA duplexes (Holliday junction).. The RuvA-RuvB-RuvC complex processes Holliday junction (HJ) DNA during genetic recombination and DNA repair. Endonuclease that resolves HJ intermediates. Cleaves cruciform DNA by making single-stranded nicks across the HJ at symmetrical positions within the homologous arms, yielding a 5'-phosphate and a 3'-hydroxyl group; requires a central core of homology in the junction. The consensus cleavage sequence is 5'-(A/T)TT(C/G)-3'. Cleavage occurs on the 3'-side of the TT dinucleotide at the point of strand exchange. HJ branch migration catalyzed by RuvA-RuvB allows RuvC to scan DNA until it finds its consensus sequence, where it cleaves and resolves the cruciform DNA. In Cytophaga hutchinsonii (strain ATCC 33406 / DSM 1761 / CIP 103989 / NBRC 15051 / NCIMB 9469 / D465), this protein is Crossover junction endodeoxyribonuclease RuvC.